The sequence spans 149 residues: MSTQSRILVLNGPNLNLLGLREPAHYGSQNLEQIVNALTTQADALGVEIEHLQSNREYELIEAIHNAYQRIDFIIINPAAFTHTSVALRDALLGVDIPFIEVHLSNVHAREPFRHHSYLSDKAVGVICGLGADGYEFALNAAVKRLRSN.

Y26 serves as the catalytic Proton acceptor. Residues N77, H83, and D90 each coordinate substrate. The active-site Proton donor is H103. Residues 104 to 105 (LS) and R114 each bind substrate.

It belongs to the type-II 3-dehydroquinase family. Homododecamer.

It carries out the reaction 3-dehydroquinate = 3-dehydroshikimate + H2O. It participates in metabolic intermediate biosynthesis; chorismate biosynthesis; chorismate from D-erythrose 4-phosphate and phosphoenolpyruvate: step 3/7. In terms of biological role, catalyzes a trans-dehydration via an enolate intermediate. The chain is 3-dehydroquinate dehydratase from Aliivibrio fischeri (strain MJ11) (Vibrio fischeri).